Consider the following 76-residue polypeptide: Large ribosomal subunit protein bL31 (76 aa).

It belongs to the bacterial ribosomal protein bL31 family. Type A subfamily. In terms of assembly, part of the 50S ribosomal subunit.

In terms of biological role, binds the 23S rRNA. The polypeptide is Large ribosomal subunit protein bL31 (Rhizorhabdus wittichii (strain DSM 6014 / CCUG 31198 / JCM 15750 / NBRC 105917 / EY 4224 / RW1) (Sphingomonas wittichii)).